The following is a 497-amino-acid chain: tRNA-2-methylthio-N(6)-dimethylallyladenosine synthase (497 aa).

Residues 44 to 161 enclose the MTTase N-terminal domain; the sequence is KKVFVTTQGC…LPELYDQSHQ (118 aa). [4Fe-4S] cluster is bound by residues C53, C90, C124, C205, C209, and C212. Residues 191–423 form the Radical SAM core domain; it reads RVEGFKAFVS…QKVIIDSTLA (233 aa). A TRAM domain is found at 426–494; the sequence is HEMVGTTTRV…PHMVKGEIEA (69 aa).

The protein belongs to the methylthiotransferase family. MiaB subfamily. In terms of assembly, monomer. Requires [4Fe-4S] cluster as cofactor.

It localises to the cytoplasm. It catalyses the reaction N(6)-dimethylallyladenosine(37) in tRNA + (sulfur carrier)-SH + AH2 + 2 S-adenosyl-L-methionine = 2-methylsulfanyl-N(6)-dimethylallyladenosine(37) in tRNA + (sulfur carrier)-H + 5'-deoxyadenosine + L-methionine + A + S-adenosyl-L-homocysteine + 2 H(+). In terms of biological role, catalyzes the methylthiolation of N6-(dimethylallyl)adenosine (i(6)A), leading to the formation of 2-methylthio-N6-(dimethylallyl)adenosine (ms(2)i(6)A) at position 37 in tRNAs that read codons beginning with uridine. This Psychrobacter cryohalolentis (strain ATCC BAA-1226 / DSM 17306 / VKM B-2378 / K5) protein is tRNA-2-methylthio-N(6)-dimethylallyladenosine synthase.